Here is a 630-residue protein sequence, read N- to C-terminus: Protein zwilch homolog (630 aa).

Belongs to the ZWILCH family. Component of the RZZ complex composed of rod-1, czw-1 and zwl-1. Interacts with the spindly-like protein spdl-1. Interacts with NDC80 complex component ndc-80.

It localises to the cytoplasm. It is found in the cell cortex. The protein resides in the chromosome. The protein localises to the centromere. Its subcellular location is the kinetochore. It localises to the cytoskeleton. It is found in the spindle. Its function is as follows. Essential component of the mitotic checkpoint, which prevents cells from prematurely exiting mitosis. Required for chromosome segregation, the assembly of the dynein-dynactin and mdf-1-mdf-2 complexes onto kinetochores and spindle pole separation. Its function related to the spindle assembly machinery and kinetochore-microtubule attachments likely depends on its association in the mitotic RZZ complex. The RZZ complex recruits the spindly-like protein spdl-1 to kinetochores. To prevent irregular chromosome segregation, the complex also inhibits the attachment of the kinetochore-associated NDC80 complex to microtubules. The recruitment of spdl-1 to kinetochores relieves this inhibition. Required for embryonic development. This is Protein zwilch homolog (zwl-1) from Caenorhabditis elegans.